Reading from the N-terminus, the 120-residue chain is Hydrogenase maturation factor HypA (120 aa).

His2 serves as a coordination point for Ni(2+). Residues Cys73, His76, Cys89, and Cys92 each contribute to the Zn(2+) site.

Belongs to the HypA/HybF family.

Its function is as follows. Involved in the maturation of [NiFe] hydrogenases. Required for nickel insertion into the metal center of the hydrogenase. This chain is Hydrogenase maturation factor HypA, found in Deinococcus radiodurans (strain ATCC 13939 / DSM 20539 / JCM 16871 / CCUG 27074 / LMG 4051 / NBRC 15346 / NCIMB 9279 / VKM B-1422 / R1).